A 77-amino-acid chain; its full sequence is Acyl carrier protein (77 aa).

Residues 2 to 77 (ADVLERVTKI…DAVTYIESHL (76 aa)) enclose the Carrier domain. At Ser-37 the chain carries O-(pantetheine 4'-phosphoryl)serine.

The protein belongs to the acyl carrier protein (ACP) family. 4'-phosphopantetheine is transferred from CoA to a specific serine of apo-ACP by AcpS. This modification is essential for activity because fatty acids are bound in thioester linkage to the sulfhydryl of the prosthetic group.

Its subcellular location is the cytoplasm. Its pathway is lipid metabolism; fatty acid biosynthesis. Its function is as follows. Carrier of the growing fatty acid chain in fatty acid biosynthesis. The sequence is that of Acyl carrier protein from Bacillus mycoides (strain KBAB4) (Bacillus weihenstephanensis).